The primary structure comprises 155 residues: MSAVAINHFFGLPEAIEKLILPISRSGESNNESRGRGSSNNIPIDILESPKEYIFYLDIPGISKSDIQVTVEEERTLVIKSNGKRKRDDDESEEGSKYIRLERRLAQNLVKKFRLPEDADMASVTAKYQEGVLTVVIKKLPPQPPKPKTVQIAVS.

In terms of domain architecture, sHSP spans 35–155 (GRGSSNNIPI…KPKTVQIAVS (121 aa)).

This sequence belongs to the small heat shock protein (HSP20) family. May form oligomeric structures.

The protein resides in the cytoplasm. This Arabidopsis thaliana (Mouse-ear cress) protein is 17.4 kDa class III heat shock protein (HSP17.4B).